Here is a 266-residue protein sequence, read N- to C-terminus: Succinate dehydrogenase [ubiquinone] iron-sulfur subunit, mitochondrial (266 aa).

A mitochondrion-targeting transit peptide spans Met-1 to Ala-20. The 2Fe-2S ferredoxin-type domain occupies Phe-36–Met-127. [2Fe-2S] cluster is bound by residues Cys-87, Cys-92, Cys-95, and Cys-107. The 4Fe-4S ferredoxin-type domain maps to Asp-169–Tyr-199. [4Fe-4S] cluster is bound by residues Cys-179, Cys-182, and Cys-185. Cys-189 serves as a coordination point for [3Fe-4S] cluster. An a ubiquinone-binding site is contributed by Trp-194. 2 residues coordinate [3Fe-4S] cluster: Cys-236 and Cys-242. Residue Cys-246 participates in [4Fe-4S] cluster binding.

The protein belongs to the succinate dehydrogenase/fumarate reductase iron-sulfur protein family. As to quaternary structure, component of complex II composed of four subunits: a flavoprotein (FP), an iron-sulfur protein (IP), and a cytochrome b composed of a large and a small subunit. The cofactor is [2Fe-2S] cluster. Requires [3Fe-4S] cluster as cofactor. [4Fe-4S] cluster is required as a cofactor.

It is found in the mitochondrion inner membrane. The catalysed reaction is a quinone + succinate = fumarate + a quinol. Its pathway is carbohydrate metabolism; tricarboxylic acid cycle; fumarate from succinate (eukaryal route): step 1/1. Subunit of succinate dehydrogenase (SDH) that is involved in complex II of the mitochondrial electron transport chain and is responsible for transferring electrons from succinate to ubiquinone (coenzyme Q). SDH1 and SDH2 form the catalytic dimer. Electrons flow from succinate to the FAD bound to SDH1, and sequentially through the iron-sulfur clusters bound to SDH2 and enter the membrane dimer formed by SDH3 and SDH4. The polypeptide is Succinate dehydrogenase [ubiquinone] iron-sulfur subunit, mitochondrial (SDH2) (Saccharomyces cerevisiae (strain ATCC 204508 / S288c) (Baker's yeast)).